A 365-amino-acid polypeptide reads, in one-letter code: 3,4-dihydroxy-2-butanone 4-phosphate synthase (365 aa).

A DHBP synthase region spans residues 1–201; that stretch reads MALNTIDELI…IADLIHYRLI (201 aa). Residues 27 to 28, D32, 140 to 144, and E164 contribute to the D-ribulose 5-phosphate site; these read RE and RAGHT. E28 serves as a coordination point for Mg(2+). H143 provides a ligand contact to Mg(2+). A GTP cyclohydrolase II-like region spans residues 202–365; it reads HERTVERIAE…LEVVEYLPAE (164 aa).

It in the N-terminal section; belongs to the DHBP synthase family. The protein in the C-terminal section; belongs to the GTP cyclohydrolase II family. Mg(2+) serves as cofactor. Mn(2+) is required as a cofactor.

The catalysed reaction is D-ribulose 5-phosphate = (2S)-2-hydroxy-3-oxobutyl phosphate + formate + H(+). It functions in the pathway cofactor biosynthesis; riboflavin biosynthesis; 2-hydroxy-3-oxobutyl phosphate from D-ribulose 5-phosphate: step 1/1. In terms of biological role, catalyzes the conversion of D-ribulose 5-phosphate to formate and 3,4-dihydroxy-2-butanone 4-phosphate. The chain is 3,4-dihydroxy-2-butanone 4-phosphate synthase (ribB) from Pseudomonas aeruginosa (strain ATCC 15692 / DSM 22644 / CIP 104116 / JCM 14847 / LMG 12228 / 1C / PRS 101 / PAO1).